We begin with the raw amino-acid sequence, 1132 residues long: Eisosome protein SEG2 (1132 aa).

Positions 76–95 (KRTSSLPNQGHKNTSNNSAG) are enriched in polar residues. Disordered stretches follow at residues 76–142 (KRTS…GNSG) and 171–225 (RYSL…NDYH). The span at 101–113 (AHEDAETTFREFG) shows a compositional bias: basic and acidic residues. Residues 115 to 142 (KQSSKVLNISSSTGQNSKSRTTSLGNSG) are compositionally biased toward polar residues. At Ser-137 the chain carries Phosphoserine. Residues 208 to 225 (GSQEKKSESGGKSKNDYH) are compositionally biased toward basic and acidic residues. Phosphoserine is present on Ser-280. The tract at residues 404-429 (PTLSEPKPAYVPPEDVEKEPSTLSNQ) is disordered. Phosphoserine is present on residues Ser-504 and Ser-507. Disordered stretches follow at residues 510-938 (GGNQ…FRSM) and 961-993 (EKKEKGGHVSRKSWTFGLPSPLKRRTSHSTHTT). Lys-526 participates in a covalent cross-link: Glycyl lysine isopeptide (Lys-Gly) (interchain with G-Cter in ubiquitin). 2 stretches are compositionally biased toward acidic residues: residues 550 to 561 (DQEEALSDNEPE) and 595 to 644 (KDDD…DDEY). Phosphoserine is present on Ser-556. Polar residues-rich tracts occupy residues 688-699 (SENAEVSQSGTN) and 710-735 (YLTNTSSDTFSLDSENVNSKSSTDTT). Lys-743 is covalently cross-linked (Glycyl lysine isopeptide (Lys-Gly) (interchain with G-Cter in ubiquitin)). The segment covering 761–773 (SSTSSSIYSIETS) has biased composition (low complexity). Polar residues-rich tracts occupy residues 774–810 (PNIDSSTGKTASNTKTNSHGPPTSISKQKYDQSSSHQ) and 827–845 (NRSCLRTLRGSSNEATLSH). Residues 850 to 860 (PASDSSSSPPY) show a composition bias toward low complexity. Positions 916 to 930 (PPARKSSFEKERPAK) are enriched in basic and acidic residues. A phosphoserine mark is found at Ser-980 and Ser-1022.

The protein belongs to the SEG1 family. In terms of assembly, component of eisosomes, large cytoplasmic protein assemblies that localize to specialized domains termed MCCs on the plasma membrane.

The protein resides in the cell membrane. Likely plays only a minor role in eisosome assembly. This is Eisosome protein SEG2 (SEG2) from Saccharomyces cerevisiae (strain ATCC 204508 / S288c) (Baker's yeast).